The primary structure comprises 276 residues: Ammonia monooxygenase alpha subunit (276 aa).

The next 5 membrane-spanning stretches (helical) occupy residues 29–49 (VYFP…FMLL), 66–86 (PVVT…YLWV), 96–116 (LCVV…FYWW), 123–143 (FVTP…LYLT), and 150–170 (ALVG…PIFG). The Cu(+) site is built by D187, H191, and H204. The chain crosses the membrane as a helical span at residues 219–239 (VIAAFFSAFVSMLMFTVWWYL).

The soluble ammonia monooxygenase is a nonamer composed of three alpha subunits (AmoA), three beta subunits (AmoB) and three gamma subunits (Cytochrome c1 PetC). The cofactor is Cu(+).

Its subcellular location is the cell membrane. It is found in the cytoplasm. It catalyses the reaction AH2 + NH4(+) + O2 = hydroxylamine + A + H2O + H(+). Its activity is regulated as follows. In vitro, inhibited by acetylene. In fact, acetylene is oxidized to ketene which binds irreversibly to His-191 of ammonia monooxygenase alpha subunit (AmoA). Its function is as follows. Part of the ammonia monooxygenase complex, which catalyzes the oxidation of ammonia to hydroxylamine, the first reaction in the process of ammonia oxidation to nitrite. The chain is Ammonia monooxygenase alpha subunit from Nitrosomonas europaea (strain ATCC 19718 / CIP 103999 / KCTC 2705 / NBRC 14298).